Reading from the N-terminus, the 308-residue chain is Ankyrin repeat and SOCS box protein 12 (308 aa).

5 ANK repeats span residues 63–92, 96–125, 129–158, 171–200, and 213–243; these read IPGT…DVDS, KAQT…CPSG, NNCS…EANV, SCSG…DPDY, and QPRT…NIYL. In terms of domain architecture, SOCS box spans 268 to 308; that stretch reads PRSLLSQTRLVIRRSLCRANQSQATDQLDIPPVLISYLKHQ.

The protein belongs to the ankyrin SOCS box (ASB) family. Interacts with CUL5 and RNF7.

Its pathway is protein modification; protein ubiquitination. Functionally, probable substrate-recognition component of a SCF-like ECS (Elongin-Cullin-SOCS-box protein) E3 ubiquitin-protein ligase complex which mediates the ubiquitination and subsequent proteasomal degradation of target proteins. The chain is Ankyrin repeat and SOCS box protein 12 (Asb12) from Mus musculus (Mouse).